Here is a 421-residue protein sequence, read N- to C-terminus: Lipid II:glycine glycyltransferase (421 aa).

Belongs to the FemABX family. In terms of assembly, monomer.

It localises to the cytoplasm. It catalyses the reaction beta-D-GlcNAc-(1-&gt;4)-Mur2Ac(oyl-L-Ala-D-isoglutaminyl-L-Lys-D-Ala-D-Ala)-di-trans,octa-cis-undecaprenyl diphosphate + glycyl-tRNA(Gly) = beta-D-GlcNAc-(1-&gt;4)-Mur2Ac(oyl-L-Ala-D-isoglutaminyl-L-Lys-(N(6)-Gly)-D-Ala-D-Ala)-di-trans,octa-cis-undecaprenyl diphosphate + tRNA(Gly) + H(+). Functionally, catalyzes the incorporation of the first glycine of the pentaglycine interpeptide bridge, which is characteristic of the S.aureus peptidoglycan. This glycine is added to the epsilon-amino group of the L-lysine of the membrane-bound lipid II intermediate (GlcNAc-(beta-1,4)-N-acetylmuramic acid(-L-Ala-D-iGln-L-Lys-D-Ala-D-Ala)-pyrophosphoryl-undecaprenol), using glycyl-tRNA(Gly) as donor, in a ribosome-independent mechanism. Involved in methicillin resistance. This is Lipid II:glycine glycyltransferase (femX) from Staphylococcus aureus (strain COL).